A 1105-amino-acid chain; its full sequence is DNA polymerase delta catalytic subunit (1105 aa).

Residues 1–46 (MSSGGRGGKRRGAPPPGPSGAAAKRAHPGGTPQPPPPAATAAAPVA) form a disordered region. Positions 1015, 1018, 1030, and 1033 each coordinate Zn(2+). The segment at 1015–1033 (CLGCKAVISGSNQTLCFHC) adopts a CysA-type zinc-finger fold. The [4Fe-4S] cluster site is built by Cys-1062, Cys-1065, Cys-1075, and Cys-1080. Residues 1062–1080 (CQECQGSLHQDVLCTSRDC) carry the CysB motif motif.

This sequence belongs to the DNA polymerase type-B family. Heterodimer with subunits of 125 kDa and 50 kDa. The 125 kDa subunit contains the polymerase active site and most likely the active site for the 3'-5' exonuclease activity. Requires [4Fe-4S] cluster as cofactor.

It is found in the nucleus. It catalyses the reaction DNA(n) + a 2'-deoxyribonucleoside 5'-triphosphate = DNA(n+1) + diphosphate. Its function is as follows. This polymerase possesses two enzymatic activities: DNA synthesis (polymerase) and an exonucleolytic activity that degrades single-stranded DNA in the 3'- to 5'-direction. This Oryza sativa subsp. japonica (Rice) protein is DNA polymerase delta catalytic subunit (POLD1).